We begin with the raw amino-acid sequence, 3078 residues long: Probable polyketide synthase 34 (3078 aa).

The region spanning 28–462 (SGDVAVIGIG…GSNVCLILSE (435 aa)) is the Ketosynthase family 3 (KS3) domain. Catalysis depends on for beta-ketoacyl synthase activity residues Cys200, His339, and His385. The tract at residues 665 to 698 (GVSADIIIGHSLGEISSSYCSGIIDFQTLCYLTY) is acyl/malonyl transferase. Ser675 acts as the For acyl/malonyl transferase activity in catalysis. Positions 954-1083 (HEKIKNEGPS…GNFSLTKHNI (130 aa)) are N-terminal hotdog fold. One can recognise a PKS/mFAS DH domain in the interval 954-1264 (HEKIKNEGPS…CTIVGSNPDS (311 aa)). The active-site Proton acceptor; for dehydratase activity is the His995. The tract at residues 1099–1264 (NFTSISKQDL…CTIVGSNPDS (166 aa)) is C-terminal hotdog fold. Asp1171 serves as the catalytic Proton donor; for dehydratase activity. A disordered region spans residues 1375 to 1396 (NINNNNNNNNNNNNNNNNNSNG). The Carrier domain occupies 2541–2618 (DNNEIIRSTI…QSIEIIKSAH (78 aa)). The residue at position 2578 (Ser2578) is an O-(pantetheine 4'-phosphoryl)serine. Disordered regions lie at residues 2617–2640 (AHNN…NNNN) and 2739–2761 (NKGS…DNNS). Low complexity predominate over residues 2619-2640 (NNNNNNNNNNNNNNNNNNNNNN). A coiled-coil region spans residues 2621–2652 (NNNNNNNNNNNNNNNNNNNNLVKKEQQSLDEF).

Pantetheine 4'-phosphate serves as cofactor.

Functionally, probable polyketide synthase. This is Probable polyketide synthase 34 (pks34) from Dictyostelium discoideum (Social amoeba).